The following is a 200-amino-acid chain: Holliday junction branch migration complex subunit RuvA (200 aa).

A domain I region spans residues 1–64 (MYAYFRGRLV…EDALQLYGFA (64 aa)). The tract at residues 65-143 (TEEEKQLFRL…KLAPVGSAVA (79 aa)) is domain II. A flexible linker region spans residues 144–154 (SVAADRGGFRE). The domain III stretch occupies residues 154-200 (EDAVNALMTLGFPRPVANQAVGCALEPEPDASLEVVIKRALATMHNR).

Belongs to the RuvA family. Homotetramer. Forms an RuvA(8)-RuvB(12)-Holliday junction (HJ) complex. HJ DNA is sandwiched between 2 RuvA tetramers; dsDNA enters through RuvA and exits via RuvB. An RuvB hexamer assembles on each DNA strand where it exits the tetramer. Each RuvB hexamer is contacted by two RuvA subunits (via domain III) on 2 adjacent RuvB subunits; this complex drives branch migration. In the full resolvosome a probable DNA-RuvA(4)-RuvB(12)-RuvC(2) complex forms which resolves the HJ.

It is found in the cytoplasm. The RuvA-RuvB-RuvC complex processes Holliday junction (HJ) DNA during genetic recombination and DNA repair, while the RuvA-RuvB complex plays an important role in the rescue of blocked DNA replication forks via replication fork reversal (RFR). RuvA specifically binds to HJ cruciform DNA, conferring on it an open structure. The RuvB hexamer acts as an ATP-dependent pump, pulling dsDNA into and through the RuvAB complex. HJ branch migration allows RuvC to scan DNA until it finds its consensus sequence, where it cleaves and resolves the cruciform DNA. The polypeptide is Holliday junction branch migration complex subunit RuvA (Chlorobium phaeovibrioides (strain DSM 265 / 1930) (Prosthecochloris vibrioformis (strain DSM 265))).